The chain runs to 259 residues: HTH-type transcriptional regulator TtgV (259 aa).

The HTH iclR-type domain occupies 14–76 (IQVIARAASI…GPAGGFRLGP (63 aa)). Residues 36 to 59 (LAAIAQLVGLPRSTVQRIINALEE) constitute a DNA-binding region (H-T-H motif). The 165-residue stretch at 89–253 (ILSLVKPYLR…KLNIERAIGR (165 aa)) folds into the IclR-ED domain.

Functionally, represses the expression of the ttgGHI and ttgVW operons. Binds to the ttgGHI / ttgVW intergenic region, probably preventing binding of RNA polymerase; ttgV dissociates from this region in the presence of 1-hexanol. In Pseudomonas putida (strain DOT-T1E), this protein is HTH-type transcriptional regulator TtgV (ttgV).